The sequence spans 328 residues: Malate dehydrogenase (328 aa).

Residue 12-18 participates in NAD(+) binding; sequence GAAGQIG. 2 residues coordinate substrate: Arg-93 and Arg-99. NAD(+)-binding positions include Asn-106, Gln-113, and 130–132; that span reads VGN. 2 residues coordinate substrate: Asn-132 and Arg-166. His-191 acts as the Proton acceptor in catalysis.

The protein belongs to the LDH/MDH superfamily. MDH type 2 family.

It catalyses the reaction (S)-malate + NAD(+) = oxaloacetate + NADH + H(+). In terms of biological role, catalyzes the reversible oxidation of malate to oxaloacetate. The sequence is that of Malate dehydrogenase from Dechloromonas aromatica (strain RCB).